The primary structure comprises 408 residues: MAVQQKRRGLSFIDAKASNVKKIAVMASTVAFEFNKATLRLRRSLHISPRSSPEVQRKATAGENSEVGSPESSLSTSRCSKRDRKLCAELSSFALYPIFGALSPSHFSSPNLLFQSEKNSSRRSFEFMQLPDTDICQIMSFLDAQSLLNLSQTCSHLRQLCLAHEDNAGKRDVTSHEITISFNQIHRRTEVRLLKRERTRTDRQFISNNIRGVLAPFSRALTKITFETTVFVTDWLDEILQLHRENRLIPLSLLFTGGALTKGHQVTGADLRSITETEFVDFVTKLQPHLQEVQLSTSRIFKISTDPSQLLGMISMLSSFGIVYERPPLHFYHEEISNAIALWKSDPLSRCCDVYMRRPHDVSSESWIKLAGSIDESRIDPYTDEVLVSQITIKHSFLVHIDLVFHFH.

The tract at residues 49 to 77 (PRSSPEVQRKATAGENSEVGSPESSLSTS) is disordered. The segment covering 62 to 77 (GENSEVGSPESSLSTS) has biased composition (polar residues). Residues 124 to 170 (SFEFMQLPDTDICQIMSFLDAQSLLNLSQTCSHLRQLCLAHEDNAGK) enclose the F-box domain.

This is an uncharacterized protein from Caenorhabditis elegans.